Consider the following 381-residue polypeptide: Pentatricopeptide repeat-containing protein 2, mitochondrial (381 aa).

The stretch at 159 to 193 (TSFNILMDMLFTKGKYERALQVLIEMKNQDVRFSK) is one PPR repeat. Residue S375 is modified to Phosphoserine.

Belongs to the PTCD2 family. In terms of tissue distribution, high expression in heart and liver and low expression in kidney, brain and testis.

It is found in the mitochondrion. In terms of biological role, involved in mitochondrial RNA maturation and mitochondrial respiratory chain function. This Mus musculus (Mouse) protein is Pentatricopeptide repeat-containing protein 2, mitochondrial (Ptcd2).